The chain runs to 728 residues: Polyribonucleotide nucleotidyltransferase (728 aa).

2 residues coordinate Mg(2+): aspartate 503 and aspartate 509. The KH domain maps to 570 to 629 (PRLTTIKIPSDCIGMVIGKGGETIRGITEETGAEINIADDGTVTIACTTKEGTDAALATI). The S1 motif domain occupies 639–713 (GNIYVGKVRD…GKTKFALSIK (75 aa)).

This sequence belongs to the polyribonucleotide nucleotidyltransferase family. Requires Mg(2+) as cofactor.

It is found in the cytoplasm. The catalysed reaction is RNA(n+1) + phosphate = RNA(n) + a ribonucleoside 5'-diphosphate. Functionally, involved in mRNA degradation. Catalyzes the phosphorolysis of single-stranded polyribonucleotides processively in the 3'- to 5'-direction. This Chlorobium chlorochromatii (strain CaD3) protein is Polyribonucleotide nucleotidyltransferase.